The following is a 278-amino-acid chain: Octanoyl-[GcvH]:protein N-octanoyltransferase (278 aa).

In terms of domain architecture, BPL/LPL catalytic spans 41-247 (LVSPPTIRTW…LLHRLAGEVH (207 aa)). Cys-146 (acyl-thioester intermediate) is an active-site residue.

This sequence belongs to the octanoyltransferase LipL family.

It carries out the reaction N(6)-octanoyl-L-lysyl-[glycine-cleavage complex H protein] + L-lysyl-[lipoyl-carrier protein] = N(6)-octanoyl-L-lysyl-[lipoyl-carrier protein] + L-lysyl-[glycine-cleavage complex H protein]. It participates in protein modification; protein lipoylation via endogenous pathway; protein N(6)-(lipoyl)lysine from octanoyl-[acyl-carrier-protein]. Its function is as follows. Catalyzes the amidotransfer (transamidation) of the octanoyl moiety from octanoyl-GcvH to the lipoyl domain of the E2 subunit of lipoate-dependent enzymes. The polypeptide is Octanoyl-[GcvH]:protein N-octanoyltransferase (Lysinibacillus sphaericus (strain C3-41)).